Reading from the N-terminus, the 95-residue chain is Protein TusB (95 aa).

Belongs to the DsrH/TusB family. As to quaternary structure, heterohexamer, formed by a dimer of trimers. The hexameric TusBCD complex contains 2 copies each of TusB, TusC and TusD. The TusBCD complex interacts with TusE.

The protein localises to the cytoplasm. In terms of biological role, part of a sulfur-relay system required for 2-thiolation of 5-methylaminomethyl-2-thiouridine (mnm(5)s(2)U) at tRNA wobble positions. This Photorhabdus laumondii subsp. laumondii (strain DSM 15139 / CIP 105565 / TT01) (Photorhabdus luminescens subsp. laumondii) protein is Protein TusB.